A 59-amino-acid polypeptide reads, in one-letter code: Single-pass membrane and coiled-coil domain-containing protein 4 (59 aa).

The segment at 1-23 (MRQLKGKPKKETSKDKKERKQAM) is disordered. A compositionally biased stretch (basic and acidic residues) spans 9 to 22 (KKETSKDKKERKQA). Positions 9–31 (KKETSKDKKERKQAMQEARQQIT) form a coiled coil. The chain crosses the membrane as a helical span at residues 32-52 (TVVLPTLAVVVLLIVVFVYVA).

It belongs to the SMCO4 family.

It localises to the membrane. The protein is Single-pass membrane and coiled-coil domain-containing protein 4 (SMCO4) of Homo sapiens (Human).